The primary structure comprises 863 residues: Valine--tRNA ligase (863 aa).

Residues 43-53 carry the 'HIGH' region motif; the sequence is PYPTGSFHIGH. Positions 517–521 match the 'KMSKS' region motif; the sequence is KMSKS. K520 provides a ligand contact to ATP.

The protein belongs to the class-I aminoacyl-tRNA synthetase family. ValS type 2 subfamily.

It is found in the cytoplasm. The catalysed reaction is tRNA(Val) + L-valine + ATP = L-valyl-tRNA(Val) + AMP + diphosphate. Catalyzes the attachment of valine to tRNA(Val). As ValRS can inadvertently accommodate and process structurally similar amino acids such as threonine, to avoid such errors, it has a 'posttransfer' editing activity that hydrolyzes mischarged Thr-tRNA(Val) in a tRNA-dependent manner. This Archaeoglobus fulgidus (strain ATCC 49558 / DSM 4304 / JCM 9628 / NBRC 100126 / VC-16) protein is Valine--tRNA ligase.